We begin with the raw amino-acid sequence, 312 residues long: Acetaldehyde dehydrogenase (312 aa).

Position 11–14 (11–14 (SGNI)) interacts with NAD(+). Cysteine 129 serves as the catalytic Acyl-thioester intermediate. NAD(+)-binding positions include 160–168 (SAGPGTRAN) and asparagine 287.

The protein belongs to the acetaldehyde dehydrogenase family.

The catalysed reaction is acetaldehyde + NAD(+) + CoA = acetyl-CoA + NADH + H(+). This is Acetaldehyde dehydrogenase (xylQ) from Sphingobium yanoikuyae (Sphingomonas yanoikuyae).